The primary structure comprises 257 residues: MSDEEQRIAEIESLASIFPDLLEETTDKQLVFKFDRDIGMTINLPEDYPSISPPIFELSGPYLRREQKEVLHNSLNDVYIENIGFPVIFNWISLVQDFIRDLPEEVAEPSHVADDVVTPMAEEIDDMNIRHGEVLTDRKSAFQAHLAEVRSKEDVDRVMRILKSNTKICRATHNITAYRYMTEINGKPIHHHDCVDDGEFGASSKMLELMDRMKADNVMVVVSRWYGGIHLGPDRFRHINNLTRQILSDNNYGPKKS.

Residues A9–L102 enclose the RWD domain.

Belongs to the IMPACT family. In terms of assembly, interacts with gcn-1; prevents the interaction of gcn-1 with gcn-2 and inhibits gcn-2 kinase activity. Interaction with rpl-39; this interaction occurs in a gcn-1-independent manner. Associates with ribosomes; this interaction occurs in a gcn-1-independent manner. Associates with actin; this interaction occurs in a gcn-1-independent manner.

The protein resides in the cytoplasm. Translational regulator that ensures constant high levels of translation under amino acid starvation. Plays a role as a negative regulator of the gcn-2 kinase activity; impairs gcn-1-mediated gcn-2 activation, and hence gcn-2-mediated eIF-2-alpha phosphorylation and subsequent down-regulation of protein synthesis in amino acid-starved cells. Plays a role in differentiation of neuronal cells by stimulating neurite outgrowth. The protein is Protein IMPACT homolog of Caenorhabditis elegans.